The sequence spans 371 residues: GDP-mannose 3,5-epimerase 2 (371 aa).

NAD(+) is bound by residues Gly-29 to Lys-55, Asp-53, and Asp-73. Substrate contacts are provided by residues Gly-98 and Ser-138–Cys-140. The NAD(+) site is built by Tyr-168 and Lys-172. Catalysis depends on Tyr-168, which acts as the Proton acceptor. Substrate is bound by residues Asn-197, Glu-210–Ala-212, Lys-219, Gln-235–Arg-237, Arg-300, and Ser-350.

It belongs to the NAD(P)-dependent epimerase/dehydratase family. NAD(+) serves as cofactor.

It catalyses the reaction GDP-alpha-D-mannose = GDP-beta-L-gulose. It carries out the reaction GDP-beta-L-gulose = GDP-beta-L-galactose. It functions in the pathway cofactor biosynthesis; L-ascorbate biosynthesis via GDP-alpha-D-mannose pathway; L-ascorbate from GDP-alpha-D-mannose: step 1/5. Catalyzes a reversible epimerization of GDP-D-mannose that precedes the committed step in the biosynthesis of vitamin C (L-ascorbate), resulting in the hydrolysis of the highly energetic glycosyl-pyrophosphoryl linkage. Able to catalyze 2 distinct epimerization reactions and can release both GDP-L-galactose and GDP-L-gulose from GDP-mannose. In Oryza sativa subsp. japonica (Rice), this protein is GDP-mannose 3,5-epimerase 2 (GME-2).